Reading from the N-terminus, the 41-residue chain is Large ribosomal subunit protein bL36 (41 aa).

Belongs to the bacterial ribosomal protein bL36 family.

The sequence is that of Large ribosomal subunit protein bL36 from Ruegeria pomeroyi (strain ATCC 700808 / DSM 15171 / DSS-3) (Silicibacter pomeroyi).